The primary structure comprises 94 residues: Phosphoribosyl-ATP pyrophosphatase (94 aa).

This sequence belongs to the PRA-PH family.

The protein localises to the cytoplasm. The catalysed reaction is 1-(5-phospho-beta-D-ribosyl)-ATP + H2O = 1-(5-phospho-beta-D-ribosyl)-5'-AMP + diphosphate + H(+). It participates in amino-acid biosynthesis; L-histidine biosynthesis; L-histidine from 5-phospho-alpha-D-ribose 1-diphosphate: step 2/9. The protein is Phosphoribosyl-ATP pyrophosphatase of Saccharolobus islandicus (strain M.16.27) (Sulfolobus islandicus).